A 138-amino-acid chain; its full sequence is DNA-directed RNA polymerase subunit omega (138 aa).

Residues 101-138 (AEDDDTLEADGLTIHDGADSDLDLSDDAGQDTDEADED) are disordered. Residues 119-138 (DSDLDLSDDAGQDTDEADED) are compositionally biased toward acidic residues.

The protein belongs to the RNA polymerase subunit omega family. As to quaternary structure, the RNAP catalytic core consists of 2 alpha, 1 beta, 1 beta' and 1 omega subunit. When a sigma factor is associated with the core the holoenzyme is formed, which can initiate transcription.

The catalysed reaction is RNA(n) + a ribonucleoside 5'-triphosphate = RNA(n+1) + diphosphate. Promotes RNA polymerase assembly. Latches the N- and C-terminal regions of the beta' subunit thereby facilitating its interaction with the beta and alpha subunits. The protein is DNA-directed RNA polymerase subunit omega of Rhodospirillum rubrum (strain ATCC 11170 / ATH 1.1.1 / DSM 467 / LMG 4362 / NCIMB 8255 / S1).